We begin with the raw amino-acid sequence, 387 residues long: MQNINQIKLTWISFFSYAFTGALIVITGMIMGDIADYFNLSVSEMSNIFTFLNAGILISIFLNSWLIDLISIKKQLIFGFLFSIIAILGIVFSTSILLFSINIFILGLVSGITMSIGTFIITCLYSGEKRGSQLLLTDSFFSMSGMIFPIISAYLLDRKILWYWIYVFLGIIYFLIFILTVKSHFPVSEEKTKNNNEIKNLNINIILLSISALLYILGQLSFISWVPQYTTEIININIKKTGVLVSNFWMAYMIGMWCFSFIIKFFNLQRMFIFLTGSSSVLMYCFIYSKSYLALKYTIISLGFFSSAIYTIIITLASLETKKPSAKLINLILFFGTIGTLLTFIITSPIVAKKGLYTTLIFSNVLYVIVFFLSCIIFKNSKKKDHC.

The next 12 membrane-spanning stretches (helical) occupy residues 11-31 (WISF…GMIM), 47-67 (NIFT…SWLI), 76-96 (LIFG…STSI), 101-121 (INIF…TFII), 134-154 (LLLT…ISAY), 160-180 (ILWY…FILT), 205-225 (IILL…FISW), 243-263 (VLVS…SFII), 271-291 (MFIF…YSKS), 299-319 (IISL…LASL), 331-351 (LILF…SPIV), and 358-378 (TTLI…CIIF).

The protein belongs to the major facilitator superfamily. TsgA family.

It is found in the cell membrane. In Buchnera aphidicola subsp. Schizaphis graminum (strain Sg), this protein is Protein TsgA homolog.